The following is a 156-amino-acid chain: Small ribosomal subunit protein uS7 (156 aa).

It belongs to the universal ribosomal protein uS7 family. As to quaternary structure, part of the 30S ribosomal subunit. Contacts proteins S9 and S11.

In terms of biological role, one of the primary rRNA binding proteins, it binds directly to 16S rRNA where it nucleates assembly of the head domain of the 30S subunit. Is located at the subunit interface close to the decoding center, probably blocks exit of the E-site tRNA. The sequence is that of Small ribosomal subunit protein uS7 from Deinococcus radiodurans (strain ATCC 13939 / DSM 20539 / JCM 16871 / CCUG 27074 / LMG 4051 / NBRC 15346 / NCIMB 9279 / VKM B-1422 / R1).